A 54-amino-acid chain; its full sequence is Putative neurotoxin-I (54 aa).

Cystine bridges form between Cys20/Cys42, Cys28/Cys51, and Cys32/Cys53.

In terms of tissue distribution, expressed by the venom gland.

Its subcellular location is the secreted. The polypeptide is Putative neurotoxin-I (Lychas mucronatus (Chinese swimming scorpion)).